Here is a 387-residue protein sequence, read N- to C-terminus: Fructose-1,6-bisphosphate aldolase/phosphatase (387 aa).

Residue Asp13 is the Proton acceptor; for FBP phosphatase activity of the active site. Residues Asp13, His20, Asp54, and Asp55 each coordinate Mg(2+). Position 20 (His20) interacts with beta-D-fructose 1,6-bisphosphate. A dihydroxyacetone phosphate-binding site is contributed by His20. Tyr92 serves as a coordination point for beta-D-fructose 1,6-bisphosphate. Gln96 contributes to the Mg(2+) binding site. 105-106 (GN) contacts beta-D-fructose 1,6-bisphosphate. Asp133 contacts Mg(2+). Position 134 (Lys134) interacts with beta-D-fructose 1,6-bisphosphate. Lys134 contacts dihydroxyacetone phosphate. Tyr229 serves as the catalytic Proton donor/acceptor; for FBP aldolase activity. Residues Lys232, Asp233, and Asp234 each coordinate Mg(2+). The active-site Schiff-base intermediate with DHAP; for FBP aldolase activity is Lys232. Beta-D-fructose 1,6-bisphosphate-binding positions include 242 to 243 (QS), Arg266, Asp287, and Tyr348. Residues Arg266 and Asp287 each contribute to the dihydroxyacetone phosphate site.

This sequence belongs to the FBP aldolase/phosphatase family. As to quaternary structure, homooctamer; dimer of tetramers. It depends on Mg(2+) as a cofactor.

It catalyses the reaction beta-D-fructose 1,6-bisphosphate + H2O = beta-D-fructose 6-phosphate + phosphate. The enzyme catalyses beta-D-fructose 1,6-bisphosphate = D-glyceraldehyde 3-phosphate + dihydroxyacetone phosphate. It functions in the pathway carbohydrate biosynthesis; gluconeogenesis. Its function is as follows. Catalyzes two subsequent steps in gluconeogenesis: the aldol condensation of dihydroxyacetone phosphate (DHAP) and glyceraldehyde-3-phosphate (GA3P) to fructose-1,6-bisphosphate (FBP), and the dephosphorylation of FBP to fructose-6-phosphate (F6P). This Ignicoccus hospitalis (strain KIN4/I / DSM 18386 / JCM 14125) protein is Fructose-1,6-bisphosphate aldolase/phosphatase.